Reading from the N-terminus, the 119-residue chain is ATP-dependent Clp protease adapter protein ClpS (119 aa).

Residues 1-29 form a disordered region; sequence MICPPGENKSMAERKQGGQGNGVGSSVVT.

The protein belongs to the ClpS family. Binds to the N-terminal domain of the chaperone ClpA.

Involved in the modulation of the specificity of the ClpAP-mediated ATP-dependent protein degradation. This chain is ATP-dependent Clp protease adapter protein ClpS, found in Caulobacter vibrioides (strain ATCC 19089 / CIP 103742 / CB 15) (Caulobacter crescentus).